Here is a 711-residue protein sequence, read N- to C-terminus: Polyribonucleotide nucleotidyltransferase (711 aa).

Mg(2+)-binding residues include aspartate 486 and aspartate 492. Residues 553–612 enclose the KH domain; the sequence is PRIHTIKINPDKIKDVIGKGGSVIRALTEETGTTIEIEDDGTVKIAATDGEKAKHAIRRI. The S1 motif domain occupies 622–690; it reads GRVYTGKVTR…RQGRIRLSIK (69 aa). Residues 690-711 are disordered; that stretch reads KEATEQSQPAAAPEAPAAEQGE. The segment covering 694–711 has biased composition (low complexity); it reads EQSQPAAAPEAPAAEQGE.

Belongs to the polyribonucleotide nucleotidyltransferase family. Component of the RNA degradosome, which is a multiprotein complex involved in RNA processing and mRNA degradation. The cofactor is Mg(2+).

The protein resides in the cytoplasm. The enzyme catalyses RNA(n+1) + phosphate = RNA(n) + a ribonucleoside 5'-diphosphate. In terms of biological role, involved in mRNA degradation. Catalyzes the phosphorolysis of single-stranded polyribonucleotides processively in the 3'- to 5'-direction. The protein is Polyribonucleotide nucleotidyltransferase of Shigella dysenteriae serotype 1 (strain Sd197).